A 943-amino-acid polypeptide reads, in one-letter code: WD repeat-containing protein 3 (943 aa).

WD repeat units lie at residues 21-60 (SQKG…KILI), 63-102 (GLKQ…GNVT), 105-144 (GHKA…GLYR), 147-186 (GHKD…CFKT), and 189-228 (GHRT…EIED). Phosphoserine is present on residues Ser-240 and Ser-241. A Phosphothreonine modification is found at Thr-257. One copy of the WD 6 repeat lies at 277-316 (EGRDRVVNLAVDKTGRILACHGTDSVLELFCILSKKEIQK). A disordered region spans residues 326 to 345 (RKKAKLHSSKGEEEDPEVNV). 7 WD repeats span residues 413 to 451 (GHRS…CIRT), 453 to 493 (TCEY…ETID), 494 to 533 (AHDG…DENS), 547 to 586 (QLDE…FFLS), 589 to 630 (GHKL…KSLF), 631 to 670 (AHDD…HIQT), and 673 to 712 (GHHQ…LILE). Glycyl lysine isopeptide (Lys-Gly) (interchain with G-Cter in SUMO2) cross-links involve residues Lys-474 and Lys-529. Ser-726 carries the post-translational modification Phosphoserine.

It belongs to the WD repeat WDR3/UTP12 family. In terms of assembly, part of the small subunit (SSU) processome, composed of more than 70 proteins and the RNA chaperone small nucleolar RNA (snoRNA) U3. In terms of tissue distribution, ubiquitous.

Its subcellular location is the nucleus. The protein localises to the nucleolus. Its function is as follows. Part of the small subunit (SSU) processome, first precursor of the small eukaryotic ribosomal subunit. During the assembly of the SSU processome in the nucleolus, many ribosome biogenesis factors, an RNA chaperone and ribosomal proteins associate with the nascent pre-rRNA and work in concert to generate RNA folding, modifications, rearrangements and cleavage as well as targeted degradation of pre-ribosomal RNA by the RNA exosome. The chain is WD repeat-containing protein 3 from Homo sapiens (Human).